A 453-amino-acid polypeptide reads, in one-letter code: MEQIPQEQKTEPFLASFTTTEKLGTETPTTSITPNTQFRGRYEKPNCAVCNEVGDGLHFGAEACRACTAFFRRSVALSKKYECRAGRNCEVSSNIRCMCRSCRYDKCIEVGMNPECVQNRRENDTPKADLQFDTSKTEIRRPIPNFNIVPQASAVPSTSNFMDFSIFKDTPISNFSAFSPASLPGLSSSPSLETMPLLERMRINYDKMENARNVIHRREGENIFQQKVPRAITFREATEVTTKEVSLVADWIEWCFDDFGLLPVDQKTILFQNFFVFFCMLERAFMTVKSGRDGIVVMASKDYIDYDNLEGFFKECNSGTGGTPAEIAKLIRPSFELQKRSLINLMRLENVDSYEFFALCVMLFWDFGLEGQSDECNEVGRRVKHRVTREMTFYLRNVKKHEEPLYRMASVVSILPSLQRAVRRFQEDIEMANIFNIYALPENFVNIINGKFN.

Residues 1–37 are disordered; sequence MEQIPQEQKTEPFLASFTTTEKLGTETPTTSITPNTQ. The segment covering 18 to 36 has biased composition (low complexity); it reads TTTEKLGTETPTTSITPNT. A DNA-binding region (nuclear receptor) is located at residues 44–119; it reads KPNCAVCNEV…VGMNPECVQN (76 aa). 2 NR C4-type zinc fingers span residues 47–67 and 83–107; these read CAVC…CRAC and CRAG…YDKC. An NR LBD domain is found at 178–451; that stretch reads FSPASLPGLS…ENFVNIINGK (274 aa).

This sequence belongs to the nuclear hormone receptor family.

The protein localises to the nucleus. Orphan nuclear receptor. In Caenorhabditis elegans, this protein is Nuclear hormone receptor family member nhr-12 (nhr-12).